Reading from the N-terminus, the 748-residue chain is Structure-specific endonuclease subunit SLX4 (748 aa).

A disordered region spans residues 50-102 (LSSDDDSISTQVKSVTAQKSPITQETTKNDTERNKDVDKSCNPVSTSQPDLGE). Residues 57 to 75 (ISTQVKSVTAQKSPITQET) show a composition bias toward polar residues. T72 is modified (phosphothreonine; by ATR and ATM). Basic and acidic residues predominate over residues 76–88 (TKNDTERNKDVDK). Position 113 is a phosphothreonine; by ATR and ATM (T113). Disordered regions lie at residues 215-236 (IKTQ…KGEK) and 277-303 (EKSS…PPEL). Over residues 222–236 (NSDKPPRARNNKGEK) the composition is skewed to basic and acidic residues. Low complexity predominate over residues 277–291 (EKSSSSLDNQESSQQ). The residue at position 289 (S289) is a Phosphoserine; by ATR and ATM. T319 is modified (phosphothreonine; by ATR and ATM). Residues S329 and S355 each carry the phosphoserine; by ATR and ATM modification.

This sequence belongs to the SLX4 family. Forms a heterodimer with SLX1. Interacts with RAD1; catalytic subunit of the RAD1-RAD10 endonuclease. Interacts with RTT107. In terms of processing, phosphorylated by ATR (MEC1) and ATM (TEL1) upon DNA damage. This appears to be required for the function with the RAD1-RAD10 endonuclease.

It is found in the nucleus. Its subcellular location is the cytoplasm. Regulatory subunit that interacts with and increases the activity of different structure-specific endonucleases. Has several distinct roles in protecting genome stability by resolving diverse forms of deleterious DNA structures. Component of the SLX1-SLX4 structure-specific endonuclease that resolves DNA secondary structures generated during DNA repair and recombination. Has endonuclease activity towards branched DNA substrates, introducing single-strand cuts in duplex DNA close to junctions with ss-DNA. Has a preference for simple Y, 5'-flap and replication fork-like structures. It cleaves the strand bearing the 5'-non-homologous arm at the branch site junction and generates ligatable, nicked products from the 5'-flap or replication fork substrates. Plays a critical role in maintaining the integrity of the ribosomal DNA (rDNA) loci, where it has a role in re-starting stalled replication forks. Has Holliday junction resolvase activity in vitro. Interacts with the structure-specific RAD1-RAD10 endonuclease and promotes RAD1-RAD10-dependent 3'-non-homologous tail removal (NHTR) during repair of double-strand breaks by single-strand annealing. SLX4 also promotes recovery from DNA-alkylation-induced replisome stalling during DNA replication by facilitating the error-free mode of lesion bypass. This does not require SLX1 or RAD1-RAD10, but probably RTT107. The chain is Structure-specific endonuclease subunit SLX4 from Saccharomyces cerevisiae (strain YJM789) (Baker's yeast).